A 526-amino-acid polypeptide reads, in one-letter code: Nitrogenase iron-iron protein alpha chain (526 aa).

Positions 49, 75, and 138 each coordinate [8Fe-7S] cluster. [8Fe-9S-C-homocitryl] cluster contacts are provided by cysteine 257 and histidine 423. Positions 507–526 (RNQPMPPSRKLRDAVQPAAE) are disordered.

This sequence belongs to the NifD/NifK/NifE/NifN family. As to quaternary structure, hexamer of two alpha, two beta, and two delta chains. The cofactor is [8Fe-7S] cluster. Requires [8Fe-9S-C-homocitryl] cluster as cofactor.

It carries out the reaction N2 + 8 reduced [2Fe-2S]-[ferredoxin] + 16 ATP + 16 H2O = H2 + 8 oxidized [2Fe-2S]-[ferredoxin] + 2 NH4(+) + 16 ADP + 16 phosphate + 6 H(+). Its function is as follows. This iron-iron protein is part of the nitrogenase complex that catalyzes the key enzymatic reactions in nitrogen fixation. Other nitrogenase complexes utilize a molybdenum-iron protein or a vanadium-iron protein. This Rhodobacter capsulatus (Rhodopseudomonas capsulata) protein is Nitrogenase iron-iron protein alpha chain (anfD).